A 564-amino-acid chain; its full sequence is Sulfite reductase [NADPH] hemoprotein beta-component 2 (564 aa).

Positions 426, 432, 471, and 475 each coordinate [4Fe-4S] cluster. Siroheme is bound at residue Cys-475.

It belongs to the nitrite and sulfite reductase 4Fe-4S domain family. In terms of assembly, alpha(8)-beta(8). The alpha component is a flavoprotein, the beta component is a hemoprotein. The cofactor is siroheme. [4Fe-4S] cluster serves as cofactor.

It catalyses the reaction hydrogen sulfide + 3 NADP(+) + 3 H2O = sulfite + 3 NADPH + 4 H(+). Its pathway is sulfur metabolism; hydrogen sulfide biosynthesis; hydrogen sulfide from sulfite (NADPH route): step 1/1. Functionally, component of the sulfite reductase complex that catalyzes the 6-electron reduction of sulfite to sulfide. This is one of several activities required for the biosynthesis of L-cysteine from sulfate. This is Sulfite reductase [NADPH] hemoprotein beta-component 2 from Klebsiella pneumoniae (strain 342).